The primary structure comprises 225 residues: Phosphoglycolate phosphatase (225 aa).

The Nucleophile role is filled by D11. 2 residues coordinate Mg(2+): D11 and D13. K153 is a binding site for substrate. The Mg(2+) site is built by D176 and D180.

The protein belongs to the archaeal SPP-like hydrolase family. It depends on Mg(2+) as a cofactor.

The catalysed reaction is 2-phosphoglycolate + H2O = glycolate + phosphate. In terms of biological role, catalyzes the dephosphorylation of 2-phosphoglycolate. This chain is Phosphoglycolate phosphatase, found in Halobacterium salinarum (strain ATCC 29341 / DSM 671 / R1).